Reading from the N-terminus, the 368-residue chain is D-Ala-D/L-Ala epimerase (368 aa).

Substrate contacts are provided by residues Thr135 and 160-162 (KVK). Mg(2+) contacts are provided by Asp190, Glu216, and Asp241. Residues Lys265 and 318 to 320 (DFD) contribute to the substrate site.

This sequence belongs to the mandelate racemase/muconate lactonizing enzyme family. Mg(2+) is required as a cofactor.

In terms of biological role, catalyzes the epimerization of D-Ala-D-Ala to D-Ala-L-Ala. Has broad substrate specificity and catalyzes the epimerization of a variety of dipeptides containing an N-terminal Ala followed by a hydrophobic or polar residue, such as Val, Ser and Met (in vitro). The chain is D-Ala-D/L-Ala epimerase (tfdD) from Cytophaga hutchinsonii (strain ATCC 33406 / DSM 1761 / CIP 103989 / NBRC 15051 / NCIMB 9469 / D465).